Consider the following 155-residue polypeptide: Nascent polypeptide-associated complex subunit beta (155 aa).

Disordered stretches follow at residues 1–35 and 116–155; these read MDQAKLARMQQSVRIGGKGTPRRKVKKVHKSSGAD and LAESYQNMQKNQAGADGKKDDEEDDIPDLVEGENFESNVE. Over residues 20 to 30 the composition is skewed to basic residues; it reads TPRRKVKKVHK. An NAC-A/B domain is found at 33–98; the sequence is GADDKKLQAT…GEEKELTELV (66 aa). The segment covering 136-155 has biased composition (acidic residues); it reads DEEDDIPDLVEGENFESNVE.

The protein belongs to the NAC-beta family. As to quaternary structure, part of the nascent polypeptide-associated complex (NAC), consisting of egd2 and egd1. NAC associates with ribosomes via egd1.

It is found in the cytoplasm. The protein resides in the nucleus. Functionally, component of the nascent polypeptide-associated complex (NAC), a dynamic component of the ribosomal exit tunnel, protecting the emerging polypeptides from interaction with other cytoplasmic proteins to ensure appropriate nascent protein targeting. The NAC complex also promotes mitochondrial protein import by enhancing productive ribosome interactions with the outer mitochondrial membrane and blocks the inappropriate interaction of ribosomes translating non-secretory nascent polypeptides with translocation sites in the membrane of the endoplasmic reticulum. EGD1 may act as a transcription factor that exert a negative effect on the expression of several genes that are transcribed by RNA polymerase II. The chain is Nascent polypeptide-associated complex subunit beta (egd1) from Aspergillus niger (strain ATCC MYA-4892 / CBS 513.88 / FGSC A1513).